The sequence spans 99 residues: Aspartyl/glutamyl-tRNA(Asn/Gln) amidotransferase subunit C (99 aa).

This sequence belongs to the GatC family. Heterotrimer of A, B and C subunits.

It catalyses the reaction L-glutamyl-tRNA(Gln) + L-glutamine + ATP + H2O = L-glutaminyl-tRNA(Gln) + L-glutamate + ADP + phosphate + H(+). It carries out the reaction L-aspartyl-tRNA(Asn) + L-glutamine + ATP + H2O = L-asparaginyl-tRNA(Asn) + L-glutamate + ADP + phosphate + 2 H(+). In terms of biological role, allows the formation of correctly charged Asn-tRNA(Asn) or Gln-tRNA(Gln) through the transamidation of misacylated Asp-tRNA(Asn) or Glu-tRNA(Gln) in organisms which lack either or both of asparaginyl-tRNA or glutaminyl-tRNA synthetases. The reaction takes place in the presence of glutamine and ATP through an activated phospho-Asp-tRNA(Asn) or phospho-Glu-tRNA(Gln). In Burkholderia ambifaria (strain MC40-6), this protein is Aspartyl/glutamyl-tRNA(Asn/Gln) amidotransferase subunit C.